We begin with the raw amino-acid sequence, 71 residues long: Serine palmitoyltransferase small subunit A (71 aa).

Over 1–12 (MAGMALARAWKQ) the chain is Cytoplasmic. The chain crosses the membrane as a helical span at residues 13-29 (MSWFYYQYLLVTALYML). The Lumenal segment spans residues 30–34 (EPWER). The helical transmembrane segment at 35–57 (TVFNSMLVSVVGMALYTGYVFMP) threads the bilayer. Residues 58–71 (QHIMAILHYFEIVQ) are Cytoplasmic-facing.

It belongs to the SPTSS family. SPTSSA subfamily. As to quaternary structure, component of the serine palmitoyltransferase (SPT) complex, which is composed of SPTLC1, SPTLC2 or SPTLC3 and SPTSSA or SPTSSB. The heterodimer consisting of SPTLC1 and SPTLC2/SPTLC3 forms the catalytic core of the enzyme, while SPTSSA or SPTSSB subunits determine substrate specificity. SPT also interacts with ORMDL proteins, especially ORMDL3, which negatively regulate SPT activity in the presence of ceramides. Interacts with MBOAT7; the interaction plays a role in MBOAT7 localization to mitochondria-associated membranes.

The protein localises to the endoplasmic reticulum membrane. It participates in lipid metabolism; sphingolipid metabolism. Functionally, component of the serine palmitoyltransferase multisubunit enzyme (SPT) that catalyzes the initial and rate-limiting step in sphingolipid biosynthesis by condensing L-serine and activated acyl-CoA (most commonly palmitoyl-CoA) to form long-chain bases. The SPT complex is composed of SPTLC1, SPTLC2 or SPTLC3 and SPTSSA or SPTSSB. Within this complex, the heterodimer consisting of SPTLC1 and SPTLC2/SPTLC3 forms the catalytic core. Within the SPT complex, SPTSSA stimulates the catalytic activity and plays a role in substrate specificity, which depends upon the overall complex composition. The SPTLC1-SPTLC2-SPTSSA complex shows a strong preference for C16-CoA substrate, while the SPTLC1-SPTLC3-SPTSSA isozyme uses both C14-CoA and C16-CoA as substrates, with a slight preference for C14-CoA. Independently of its action as a SPT component, may be involved in MBOAT7 localization to mitochondria-associated membranes, a membrane bridge between the endoplasmic reticulum and mitochondria, may hence affect MBOAT7-catalyzed incorporation of arachidonic acid into phosphatidylinositol. In Mus musculus (Mouse), this protein is Serine palmitoyltransferase small subunit A.